A 251-amino-acid polypeptide reads, in one-letter code: Probable transcriptional regulatory protein cgR_1708 (251 aa).

Residues 1 to 22 (MAGHSKWATTKHKKAANDAKRG) form a disordered region.

It belongs to the TACO1 family.

It is found in the cytoplasm. The polypeptide is Probable transcriptional regulatory protein cgR_1708 (Corynebacterium glutamicum (strain R)).